The chain runs to 694 residues: MGTHCSAWLRWPLLPLLPPLLLLLLLLCPTGAGAQDEDGDYEELMLALPSQEDGLADEAAHVATATFRRCSKEAWRLPGTYIVVLMEETQRLQIEQTAHRLQTRAARRGYVIKVLHIFYDLFPGFLVKMSSDLLGLALKLPHVEYIEEDSFVFAQSIPWNLERIIPAWHQTEEDRSPDGSSQVEVYLLDTSIQGAHREIEGRVTITDFNSVPEEDGTRFHRQASKCDSHGTHLAGVVSGRDAGVAKGTSLHSLRVLNCQGKGTVSGTLIGLEFIRKSQLIQPSGPLVVLLPLAGGYSRILNAACRHLARTGVVLVAAAGNFRDDACLYSPASAPEVITVGATNAQDQPVTLGTLGTNFGRCVDLFAPGKDIIGASSDCSTCFMSQSGTSQAAAHVAGIVARMLSREPTLTLAELRQRLIHFSTKDVINMAWFPEDQQVLTPNLVATLPPSTHETGGQLLCRTVWSAHSGPTRTATATARCAPEEELLSCSSFSRSGRRRGDWIEAIGGQQVCKALNAFGGEGVYAVARCCLVPRANCSIHNTPAARAGLETHVHCHQKDHVLTGCSFHWEVEDLSVRRQPALRSRRQPGQCVGHQAASVYASCCHAPGLECKIKEHGISGPSEQVTVACEAGWTLTGCNVLPGASLTLGAYSVDNLCVARVHDTARADRTSGEATVAAAICCRSRPSAKASWVQ.

A signal peptide spans 1–34 (MGTHCSAWLRWPLLPLLPPLLLLLLLLCPTGAGA). The propeptide occupies 35-155 (QDEDGDYEEL…IEEDSFVFAQ (121 aa)). Tyrosine 41 carries the post-translational modification Sulfotyrosine. Serine 50 carries the post-translational modification Phosphoserine. In terms of domain architecture, Peptidase S8 spans 158 to 470 (PWNLERIIPA…RTVWSAHSGP (313 aa)). Residues aspartate 189 and histidine 229 each act as charge relay system in the active site. Intrachain disulfides connect cysteine 226-cysteine 258 and cysteine 326-cysteine 361. Serine 389 functions as the Charge relay system in the catalytic mechanism. The tract at residues 453–694 (ETGGQLLCRT…RPSAKASWVQ (242 aa)) is C-terminal domain. Cystine bridges form between cysteine 460–cysteine 530, cysteine 480–cysteine 529, and cysteine 489–cysteine 512. The short motif at 499 to 501 (RGD) is the Cell attachment site element. Residue asparagine 536 is glycosylated (N-linked (GlcNAc...) asparagine). 6 disulfides stabilise this stretch: cysteine 537–cysteine 604, cysteine 555–cysteine 603, cysteine 565–cysteine 591, cysteine 611–cysteine 682, cysteine 629–cysteine 681, and cysteine 638–cysteine 657. Serine 691 bears the Phosphoserine mark.

It belongs to the peptidase S8 family. Monomer. Can self-associate to form dimers and higher multimers which may have increased LDLR degrading activity. The precursor protein but not the mature protein may form multimers. Interacts with APOB, VLDLR, LRP8/APOER2 and BACE1. The full-length immature form (pro-PCSK9) interacts with SCNN1A, SCNN1B and SCNN1G. The pro-PCSK9 form (via C-terminal domain) interacts with LDLR. Interacts (via the C-terminal domain) with ANXA2 (via repeat Annexin 1); the interaction inhibits the degradation of LDLR. Ca(2+) is required as a cofactor. Cleavage by furin and PCSK5 generates a truncated inactive protein that is unable to induce LDLR degradation. Post-translationally, undergoes autocatalytic cleavage in the endoplasmic reticulum to release the propeptide from the N-terminus and the cleavage of the propeptide is strictly required for its maturation and activation. The cleaved propeptide however remains associated with the catalytic domain through non-covalent interactions, preventing potential substrates from accessing its active site. As a result, it is secreted from cells as a propeptide-containing, enzymatically inactive protein. In terms of processing, phosphorylation protects the propeptide against proteolysis. Hepatocytes, kidney mesenchymal cells, intestinal ileum, colon epithelia and embryonic brain telencephalon neurons.

Its subcellular location is the cytoplasm. The protein localises to the secreted. The protein resides in the endosome. It localises to the lysosome. It is found in the cell surface. Its subcellular location is the endoplasmic reticulum. The protein localises to the golgi apparatus. With respect to regulation, its proteolytic activity is autoinhibited by the non-covalent binding of the propeptide to the catalytic domain. Inhibited by EGTA. Its function is as follows. Crucial player in the regulation of plasma cholesterol homeostasis. Binds to low-density lipid receptor family members: low density lipoprotein receptor (LDLR), very low density lipoprotein receptor (VLDLR), apolipoprotein E receptor (LRP1/APOER) and apolipoprotein receptor 2 (LRP8/APOER2), and promotes their degradation in intracellular acidic compartments. Acts via a non-proteolytic mechanism to enhance the degradation of the hepatic LDLR through a clathrin LDLRAP1/ARH-mediated pathway. May prevent the recycling of LDLR from endosomes to the cell surface or direct it to lysosomes for degradation. Can induce ubiquitination of LDLR leading to its subsequent degradation. Inhibits intracellular degradation of APOB via the autophagosome/lysosome pathway in a LDLR-independent manner. Involved in the disposal of non-acetylated intermediates of BACE1 in the early secretory pathway. Inhibits epithelial Na(+) channel (ENaC)-mediated Na(+) absorption by reducing ENaC surface expression primarily by increasing its proteasomal degradation. Regulates neuronal apoptosis via modulation of LRP8/APOER2 levels and related anti-apoptotic signaling pathways. This Mus musculus (Mouse) protein is Proprotein convertase subtilisin/kexin type 9 (Pcsk9).